Reading from the N-terminus, the 411-residue chain is Tyrosine--tRNA ligase (411 aa).

Tyr-33 provides a ligand contact to L-tyrosine. The 'HIGH' region signature appears at 38–47 (PTAESLHLGN). 2 residues coordinate L-tyrosine: Tyr-160 and Gln-164. The 'KMSKS' region signature appears at 222 to 226 (KIGKS). Lys-225 is an ATP binding site. Residues 347 to 411 (SVIETLIKNK…KKQVILFKTV (65 aa)) form the S4 RNA-binding domain.

The protein belongs to the class-I aminoacyl-tRNA synthetase family. TyrS type 1 subfamily. Homodimer.

The protein localises to the cytoplasm. The catalysed reaction is tRNA(Tyr) + L-tyrosine + ATP = L-tyrosyl-tRNA(Tyr) + AMP + diphosphate + H(+). Its function is as follows. Catalyzes the attachment of tyrosine to tRNA(Tyr) in a two-step reaction: tyrosine is first activated by ATP to form Tyr-AMP and then transferred to the acceptor end of tRNA(Tyr). The chain is Tyrosine--tRNA ligase from Mycoplasmopsis agalactiae (strain NCTC 10123 / CIP 59.7 / PG2) (Mycoplasma agalactiae).